The sequence spans 334 residues: Phospho-N-acetylmuramoyl-pentapeptide-transferase (334 aa).

10 helical membrane passes run 2 to 22, 55 to 75, 78 to 98, 116 to 136, 154 to 174, 187 to 207, 211 to 231, 236 to 256, 262 to 282, and 311 to 331; these read IPVL…GPVV, VIFL…PGGV, GWIE…LGFM, EKLL…VFVL, GLAL…VVLA, GLAA…ALVM, WVGI…CYNF, VFMG…AAVI, FLLI…IQVI, and VVLT…AGLK.

Belongs to the glycosyltransferase 4 family. MraY subfamily. The cofactor is Mg(2+).

Its subcellular location is the cell membrane. It catalyses the reaction UDP-N-acetyl-alpha-D-muramoyl-L-alanyl-gamma-D-glutamyl-meso-2,6-diaminopimeloyl-D-alanyl-D-alanine + di-trans,octa-cis-undecaprenyl phosphate = di-trans,octa-cis-undecaprenyl diphospho-N-acetyl-alpha-D-muramoyl-L-alanyl-D-glutamyl-meso-2,6-diaminopimeloyl-D-alanyl-D-alanine + UMP. The protein operates within cell wall biogenesis; peptidoglycan biosynthesis. Its function is as follows. Catalyzes the initial step of the lipid cycle reactions in the biosynthesis of the cell wall peptidoglycan: transfers peptidoglycan precursor phospho-MurNAc-pentapeptide from UDP-MurNAc-pentapeptide onto the lipid carrier undecaprenyl phosphate, yielding undecaprenyl-pyrophosphoryl-MurNAc-pentapeptide, known as lipid I. This Desulforudis audaxviator (strain MP104C) protein is Phospho-N-acetylmuramoyl-pentapeptide-transferase.